The following is a 295-amino-acid chain: Putative xyloglucan endotransglucosylase/hydrolase protein 1 (295 aa).

The N-terminal stretch at 1–24 (MNKMEYLSIFGFVSVLYLIIRVDA) is a signal peptide. The GH16 domain maps to 27–225 (YEVNGIDQSK…WSLAPFKANF (199 aa)). Glu113 acts as the Nucleophile in catalysis. Glu117 (proton donor) is an active-site residue. Residues Glu117, 129 to 131 (QTN), and 139 to 141 (NRE) each bind xyloglucan. An N-linked (GlcNAc...) asparagine glycan is attached at Asn180. Xyloglucan is bound by residues 204 to 205 (NW) and Gly209. Asn215 and Asn229 each carry an N-linked (GlcNAc...) asparagine glycan. 2 cysteine pairs are disulfide-bonded: Cys233/Cys242 and Cys278/Cys291. Arg283 contributes to the xyloglucan binding site.

Belongs to the glycosyl hydrolase 16 family. XTH group 1 subfamily. In terms of processing, contains at least one intrachain disulfide bond essential for its enzymatic activity.

The protein localises to the secreted. The protein resides in the cell wall. It is found in the extracellular space. It localises to the apoplast. It carries out the reaction breaks a beta-(1-&gt;4) bond in the backbone of a xyloglucan and transfers the xyloglucanyl segment on to O-4 of the non-reducing terminal glucose residue of an acceptor, which can be a xyloglucan or an oligosaccharide of xyloglucan.. In terms of biological role, may catalyze xyloglucan endohydrolysis (XEH) and/or endotransglycosylation (XET). Cleaves and religates xyloglucan polymers, an essential constituent of the primary cell wall, and thereby participates in cell wall construction of growing tissues. This Arabidopsis thaliana (Mouse-ear cress) protein is Putative xyloglucan endotransglucosylase/hydrolase protein 1 (XTH1).